Reading from the N-terminus, the 415-residue chain is Lipoyl synthase, mitochondrial (415 aa).

A mitochondrion-targeting transit peptide spans 1–32 (MAASTNRLRFLYSSARTVPQTGSITPISRRTY). Over residues 20 to 32 (QTGSITPISRRTY) the composition is skewed to polar residues. A disordered region spans residues 20 to 53 (QTGSITPISRRTYATTEPSPSATGAPATARKRTN). A compositionally biased stretch (low complexity) spans 33–47 (ATTEPSPSATGAPAT). Residues Cys-132, Cys-137, Cys-143, Cys-163, Cys-167, Cys-170, and Ser-378 each contribute to the [4Fe-4S] cluster site. One can recognise a Radical SAM core domain in the interval 146 to 367 (GSDKSAATAT…RQRALDMGFL (222 aa)). Residues 395-415 (AAGTAGESVTDSKAAVDEATR) form a disordered region.

Belongs to the radical SAM superfamily. Lipoyl synthase family. Requires [4Fe-4S] cluster as cofactor.

It localises to the mitochondrion. The enzyme catalyses [[Fe-S] cluster scaffold protein carrying a second [4Fe-4S](2+) cluster] + N(6)-octanoyl-L-lysyl-[protein] + 2 oxidized [2Fe-2S]-[ferredoxin] + 2 S-adenosyl-L-methionine + 4 H(+) = [[Fe-S] cluster scaffold protein] + N(6)-[(R)-dihydrolipoyl]-L-lysyl-[protein] + 4 Fe(3+) + 2 hydrogen sulfide + 2 5'-deoxyadenosine + 2 L-methionine + 2 reduced [2Fe-2S]-[ferredoxin]. It functions in the pathway protein modification; protein lipoylation via endogenous pathway; protein N(6)-(lipoyl)lysine from octanoyl-[acyl-carrier-protein]: step 2/2. Catalyzes the radical-mediated insertion of two sulfur atoms into the C-6 and C-8 positions of the octanoyl moiety bound to the lipoyl domains of lipoate-dependent enzymes, thereby converting the octanoylated domains into lipoylated derivatives. This Aspergillus flavus (strain ATCC 200026 / FGSC A1120 / IAM 13836 / NRRL 3357 / JCM 12722 / SRRC 167) protein is Lipoyl synthase, mitochondrial.